A 210-amino-acid chain; its full sequence is RNA chaperone ProQ (210 aa).

Basic and acidic residues-rich tracts occupy residues 103–124 (LKES…EKAK) and 132–144 (RKAD…DKPK). Residues 103-148 (LKESKERVFASRRTNNKEEKAKQPRRPAPRKADAAAKSDKPKAAPK) are disordered.

The protein belongs to the ProQ family.

It is found in the cytoplasm. Functionally, RNA chaperone with significant RNA binding, RNA strand exchange and RNA duplexing activities. The protein is RNA chaperone ProQ of Aeromonas salmonicida (strain A449).